The chain runs to 39 residues: MSNTGRIPLWLVGLVGGLAVITMLSLFLYGAYSGLGSSL.

A helical transmembrane segment spans residues 7 to 27 (IPLWLVGLVGGLAVITMLSLF).

The protein belongs to the PsbJ family. PSII is composed of 1 copy each of membrane proteins PsbA, PsbB, PsbC, PsbD, PsbE, PsbF, PsbH, PsbI, PsbJ, PsbK, PsbL, PsbM, PsbT, PsbX, PsbY, PsbZ, Psb30/Ycf12, at least 3 peripheral proteins of the oxygen-evolving complex and a large number of cofactors. It forms dimeric complexes.

Its subcellular location is the plastid. It localises to the chloroplast thylakoid membrane. One of the components of the core complex of photosystem II (PSII). PSII is a light-driven water:plastoquinone oxidoreductase that uses light energy to abstract electrons from H(2)O, generating O(2) and a proton gradient subsequently used for ATP formation. It consists of a core antenna complex that captures photons, and an electron transfer chain that converts photonic excitation into a charge separation. This chain is Photosystem II reaction center protein J, found in Trieres chinensis (Marine centric diatom).